Consider the following 4730-residue polypeptide: MEDQQINVDSPTSGTNTPPVVTPTTSVISEQTLEETVKYLCKICPTLLDGDQSVFQNNLSNQIPPENMNKLKKFISDSKIPVLLIQKTNPTINSSNQTSTTTSSSSSSDDNTLTSSQQQSKESFNFEIEVKFGGENKSTLAIVKRIPESIVEYSSNKSIASQLQVLNLGDGSPMDTLHNYIHNSVAPFVRSYILSASKDDATTPSGGSADKSITSQNLDKEMKQSIGAVNQKIAELEISLYNCKQQVQIPEVTLAINPEIKSISKRLKETTGRTIKPDDLGDKASSPEFLNLLQAGTTTWAKNIQNVTKHNLIENLPSDVSTSQEINFWIELETSLQNIDQQLKSPEVEVTLATLRQAKRFIASAPFETDTIGVRKAMDKVQSYKTLFKDFPITPLLTATDLDSISSSVAAIFSHLKKTKNPYYPIPRYLSFLEAIGRDMCNKVYQILRQKNLMNIDYNDFEHLNRSVRALFTLWDDQFGAFRDILRDLAKKRGNERIPLIVNIDNRIQLVIIKIGKFRKQHEDLKNVVSNVLPGSQLGGGVVQTNTSNPTSPQKQEINAIEEINQAYLEFKEIDVLQLSKEGEEIWDAVVKRYNSRTDRVETYITVKLRDRLATAKNANEMFRVYQKFKDLLKRPKIRGATHEYESQLIERVKEDIRVLHDKFKMQYNNSEAYYMSQLRDLPPVSGAIIWARQIERQLDTYMKRVANVLGDSWESDAEGQKLKSESDQFRHKLNTDHIFSKWADETEKRSFDISGRILTIVKRGNKLALDINFDSHIIMLFKEVRNLQWLGFRVPLKISFISQGAKQVYPFAVSLKETLRTYAQTSGKVTPEFSTLVASYKRDVQANITEGFRLKWETIPKVDPYVRKLSTSINNFRDKVDDLIVKYSEIKKQLDGLKSCPFKSESFNEIIANIQKVVDELNLANYSNLPQWVTQLDAQVESMLIERLIDAINSWVQLIEGKEDQKDSQSTSGSSNKGGKLNRMNYSIRNKSDEENSSDLTQPQQSQQQQQTISIKPKLEKTIHEIVIRNQILSLSPPLEVARVNWIDQLHSWLNICCDLPRIQSSRYDESAMVHRGGVDSKKQSTFRDMLPKLPQGSLESAYSAITNKLEQVQQYVSIWLQYQSLWDMDSSFVYSKLGDDLNKWQLLLNQIKKSRSTFDNSSTEKQFGPLTIDYTQVQASVNNKYDYWHKDILGHFGSKLAEKMNQFYETISSSRQELEKLSVETVSTEEAVHFIIQIQDMKKKLSSWEADLRYYRTGQDLLQRQRFSFPNDWLDCERVEGEWSAFNEILNRKNATISEAIPQLQAKILQESKSINDRIKDFIDEWTANKPLQGSIKHSTALETLKIFEGRLIRLREESDRLSKAKQALDLTDTTGSSSSDQDRLVPVEEEIQDLKAVWVELSNTWQEIDSLKETAWSAIIPRKVRKSLEDTLQKLKNLPNRIRQYSAFDHAQNLIKIYLKGNAIITDLHSEAIKDRHWKILKKRLNTNWIITELTLGSIWDSDLARNENIYREVITAAQGEIALEEFLKGVREFWTTLELDLVNYQRKCKLVRGWDDLFNKLAEHLNSISAMKMSPYYKVFEEEANHWDDRLNKVRSLLDVWIDVQRRWVYLEGIFSGSGDINQLLPAESTRFKSINSEFIAILKKVSGAPLILEVLAIERIQQTMERLSDLLGKVQKALGEYLERQRSAFARFYFVGDEDLLEIIGNSKDIIKIQKHFRKMFAGLANLTLDDEKTTIIGMSSAEGETVTFKKPISIANGPKIHEWLTMVESEMKSTLATLLSESLQHFNQVDVNDHSKYSEWVDNYPTQLVLLTSQIVWSTQVDQALGGGTLQQSKIQEQLQSIEQTTQMILNNLADSVLQDLSAQKRKKFEHLITELVHQRDVVRQLQKCKNLTGNKDFDWLYHMRYYYDATQENVLHKLVIHMANATFYYGFEYLGIGERLVQTPLTDRCYLTLTQALESRMGGNPFGPAGTGKTETVKALGSQLGRFVLVFCCDEGFDLQAMSRIFVGLCQCGAWGCFDEFNRLEERILSAVSQQIQTIQVALKENSKEVELLGGKNISLHQDMGIFVTMNPGYAGRSNLPDNLKKLFRSMAMIKPDREMIAQVMLYSQGFKTAEVLAGKIVPLFKLCQEQLSAQSHYDFGLRALKSVLVSAGGIKRKCQPPQLPPITDAESKTKADQIYCQYEIGVLLNSINDTMIPKLVADDIPLIQSLLLDVFPGSQLQPIQMDQLRKKIQEIAKQRHLVTKQEWVEKILQLHQILNINHGVMMVGPSGGGKTTSWEVYLEAIEQVDNIKSEAHVMDPKAITKDQLFGSLDLTTREWTDGLFTATLRRIIDNVRGESTKRHWIIFDGDVDPEWVENLNSLLDDNKLLTLPNGERLALPNNVRVMFEVQDLKYATLATISRCGMVWFSEEILTTQMIFQNYLDTLSNEPFDPQEKEQQKRNENAQLQQQQQTTITSPILTSPPTTSSSSRSTTSTTSMIPAGLKVQKECAAIISQYFEPGGLVHKVLEDAGQRPHIMDFTRLRVLNSFFSLMNRSIVNVIEYNQLHSDFPMSPENQSNYITNRLLYSLMWGLGGSMGLVERENFSKFIQTIAITPVPANTIPLLDYSVSIDDANWSLWKNKVPSVEVETHKVASPDVVIPTVDTTRHVDVLHAWLSEHRPLILCGPPGSGKTMTLTSTLRAFPDFEVVSLNFSSATTPELLLKTFDHHCEYKRTPSGETVLRPTQLGKWLVVFCDEINLPSTDKYGTQRVITFIRQMVEKGGFWRTSDHTWIKLDKIQFVGACNPPTDAGRVQLTHRFLRHAPILLVDFPSTSSLTQIYGTFNRALMKLLPNLRSFADNLTDAMVEFYSESQKRFTPDIQAHYIYSPRELSRWDRALLEAIQTMDGCTLEGLVRLWAHEALRLFQDRLVETEEKEWTDKKIDEVALKHFPSVNLDALKRPILYSNWLTKDYQPVNRSDLREYVKARLKVFYEEELDVPLVLFNEVLDHILRIDRVFRQPQGHALLIGVSGGGKSVLSRFVAWMNGLSIYTIKVNNNYKSSDFDDDLRMLLKRAGCKEEKICFIFDESNVLESSFLERMNTLLAGGEVPGLFEGEEFTALMHACKETAQRNGLILDSEEELYKYFTSQVRRNLHVVFTMNPASPDFHNRSATSPALFNRCVLDWFGEWSPEALFQVGSEFTRNLDLENPQYIAPPVFIQEAEIMGNNLMAIPPSHRDAVVSSLVYIHQTIGEANIRLLKRQGRQNYVTPRHYLDFINQVVLLINEKRDQLEEEQLHLNIGLKKLRDTEAQVKDLQVSLAQKNRELDVKNEQANQKLKQMVQDQQAAEIKQKDARELQVQLDVRNKEIAVQKVKAYADLEKAEPAIIEAQEAVSTIKKKHLDEIKSLPKPPTPVKLAMEAVCLMLGGKKLEWADIRKKIMEPNFITSIINYDTKKMMTPKIREAITKGYLEDPGFDYETVNRASKACGPLVKWATAQTYYSEILDRIKPLREEVEQLENAANELKLKQDEIVATITALEKSIATYKEEYATLIRETEQIKTESSKVKNKVDRSIALLDNLNSERGRWEQQSENFNTQMSTVVGDVVLASAFLAYIGFFDQNFRTDLMRKWMIRLDSVGIKFKSDLSVPSFLSKPEERLNWHANSLPSDELCIENAIMLKRFNRYPLVIDPSGQAMEFLMNQYADKKITKTSFLDSSFMKNLESALRFGCPLLVQDVENIDPVLNPVLNKEIRKKGGRILIRLGDQDVDFSPSFMIFLFTRDPTAHFTPDLCSRVTFVNFTVTPSSLQSQCLHEALKTERPDTHKKRSDLLKIQGEFQVKLRILEKSLLNALSQASGNILDDDSVISTLETLKKETTEIALKVEETETVMQEISEVSALYNPMALSCSRVYFAMEELSQFHLYQFSLRAFLDIFYNLLNNNPNLVDKKDPNERLVYLSKDIFSMTFNRVTRTLLNDDKLTFALQLTIISVKGTSNEIEESEWDFLLKGGDNLTSIKETIPQLDSLLSTTQQKWLICLRQQVPSFSKLVDHIQQNSSDWKQFFGKDQVGEPIIPESWIVAQAQLSNQQSTIVSNFRKILLMKAFHSDRVLQYSHSFVCSVFGEDFLNTQELDMANIVEKEVKSSSPLLLCSVPGYDASSKVDDLALQLHKQYKSFAIGSPEGFELAEKSIYAAAKSGTWVLLKNIHLAPQWLVQLEKKLHSLSPHPSFRLFMTSEIHPALPANLLRMSNVFSYENPPGVKANLLHTFIGIPATRMDKQPAERSRIYFLLAWFHAIIQERLRYIPLGWTKFFEFNDADLRGALDSIDYWVDLYSKGRSNIDPDKIPWIAVRTILGSTIYGGRIDNEFDMRLLYSFLEQLFTPSAFNPDFPLVPSIGLSVPEGTTRAHFMKWIEALPEISTPIWLGLPENAESLLLSNKARKMINDLQKMQSSEEDGEDDQVSGSSKKESSSSSSEDKGKAKLRATITEWTKLLPKPLKQLKRTTQNIKDPLFRCFEREISTGGKLVKKITNDLANLLELISGNIKSTNYLRSLTTSISKGIVPKEWKWYSVPETISLSVWISDFSKRMQQLSEISESSDYSSIQVWLGGLLNPEAYITATRQSASQLNGWSLENLRLHASSLGKISSEGGASFNVKGMALEGAVWNNDQLTPTDILSTPISIATLTWKDKDDPIFNNSSSKLSVPVYLNETRSELLFSIDLPYDQSTSKQNWYQRSVSISSWKSDI.

2 disordered regions span residues 1 to 23 (MEDQQINVDSPTSGTNTPPVVTP) and 91 to 120 (TINSSNQTSTTTSSSSSSDDNTLTSSQQQS). The segment at 1–1935 (MEDQQINVDS…VIHMANATFY (1935 aa)) is stem. Over residues 10-23 (SPTSGTNTPPVVTP) the composition is skewed to low complexity. Residues 867–900 (VRKLSTSINNFRDKVDDLIVKYSEIKKQLDGLKS) adopt a coiled-coil conformation. The tract at residues 964–1016 (EDQKDSQSTSGSSNKGGKLNRMNYSIRNKSDEENSSDLTQPQQSQQQQQTISI) is disordered. Over residues 969 to 978 (SQSTSGSSNK) the composition is skewed to polar residues. Over residues 1002-1016 (TQPQQSQQQQQTISI) the composition is skewed to low complexity. Coiled coils occupy residues 1204-1224 (EKMNQFYETISSSRQELEKLS), 1343-1372 (ALETLKIFEGRLIRLREESDRLSKAKQALD), 1425-1441 (RKVRKSLEDTLQKLKNL), and 1661-1689 (AIERIQQTMERLSDLLGKVQKALGEYLER). AAA stretches follow at residues 1936-2158 (YGFE…VLVS), 2238-2531 (KKIQ…FTRL), 2635-2885 (EVET…WDRA), and 2978-3252 (VFYE…QGRQ). ATP is bound at residue 1974 to 1981 (GPAGTGKT). Residues 2231 to 2253 (IQMDQLRKKIQEIAKQRHLVTKQ) adopt a coiled-coil conformation. 2276–2283 (GPSGGGKT) contributes to the ATP binding site. The disordered stretch occupies residues 2437–2486 (EPFDPQEKEQQKRNENAQLQQQQQTTITSPILTSPPTTSSSSRSTTSTTS). Positions 2441–2451 (PQEKEQQKRNE) are enriched in basic and acidic residues. Positions 2442–2462 (QEKEQQKRNENAQLQQQQQTT) form a coiled coil. Over residues 2454 to 2486 (QLQQQQQTTITSPILTSPPTTSSSSRSTTSTTS) the composition is skewed to low complexity. Residues 2674–2681 (GPPGSGKT) and 3016–3023 (GVSGGGKS) contribute to the ATP site. Coiled-coil stretches lie at residues 3271-3349 (INEK…VQLD), 3483-3585 (AQTY…NTQM), and 3854-3881 (TLETLKKETTEIALKVEETETVMQEISE). Residues 3271–3585 (INEKRDQLEE…QQSENFNTQM (315 aa)) are stalk. 2 AAA regions span residues 3638–3867 (LSKP…EIAL) and 4098–4312 (SHSF…SIDY). The segment at 4432 to 4465 (KMQSSEEDGEDDQVSGSSKKESSSSSSEDKGKAK) is disordered. Positions 4449 to 4463 (SKKESSSSSSEDKGK) are enriched in basic and acidic residues.

It belongs to the dynein heavy chain family. In terms of assembly, consists of at least two heavy chains and a number of intermediate and light chains.

It is found in the cytoplasm. It localises to the cytoskeleton. In terms of biological role, cytoplasmic dynein acts as a motor for the intracellular retrograde motility of vesicles and organelles along microtubules. Dynein has ATPase activity; the force-producing power stroke is thought to occur on release of ADP. The chain is Dynein heavy chain, cytoplasmic (dhcA) from Dictyostelium discoideum (Social amoeba).